The sequence spans 91 residues: UPF0250 protein NGO_0791 (91 aa).

The protein belongs to the UPF0250 family.

This chain is UPF0250 protein NGO_0791, found in Neisseria gonorrhoeae (strain ATCC 700825 / FA 1090).